Reading from the N-terminus, the 569-residue chain is Oxygen-dependent choline dehydrogenase (569 aa).

Residue 9-38 (DYVIIGGGSAGSVLGNRLSEDKDKEVLVLE) participates in FAD binding. Catalysis depends on H475, which acts as the Proton acceptor.

This sequence belongs to the GMC oxidoreductase family. It depends on FAD as a cofactor.

The enzyme catalyses choline + A = betaine aldehyde + AH2. It catalyses the reaction betaine aldehyde + NAD(+) + H2O = glycine betaine + NADH + 2 H(+). It participates in amine and polyamine biosynthesis; betaine biosynthesis via choline pathway; betaine aldehyde from choline (cytochrome c reductase route): step 1/1. Involved in the biosynthesis of the osmoprotectant glycine betaine. Catalyzes the oxidation of choline to betaine aldehyde and betaine aldehyde to glycine betaine at the same rate. This Staphylococcus aureus (strain MSSA476) protein is Oxygen-dependent choline dehydrogenase.